The chain runs to 131 residues: Peptide methionine sulfoxide reductase MsrB (131 aa).

Residues 8–130 form the MsrB domain; the sequence is DAEWRAQLTD…NSVCLDLKRS (123 aa). 4 residues coordinate Zn(2+): Cys-47, Cys-50, Cys-96, and Cys-99. The active-site Nucleophile is Cys-119.

Belongs to the MsrB Met sulfoxide reductase family. Zn(2+) is required as a cofactor.

It carries out the reaction L-methionyl-[protein] + [thioredoxin]-disulfide + H2O = L-methionyl-(R)-S-oxide-[protein] + [thioredoxin]-dithiol. The chain is Peptide methionine sulfoxide reductase MsrB from Alkalilimnicola ehrlichii (strain ATCC BAA-1101 / DSM 17681 / MLHE-1).